The primary structure comprises 374 residues: Chaperone protein DnaJ (374 aa).

The J domain occupies 5–70 (DYYKLLGVDR…EKRAGYDRYG (66 aa)). Residues 136-214 (GIQAPIHYVT…CNGSGRRRDE (79 aa)) form a CR-type zinc finger. Zn(2+) is bound by residues cysteine 149, cysteine 152, cysteine 166, cysteine 169, cysteine 188, cysteine 191, cysteine 202, and cysteine 205. CXXCXGXG motif repeat units follow at residues 149–156 (CDMCQGRG), 166–173 (CHTCQGSG), 188–195 (CTTCYGEG), and 202–209 (CKKCNGSG).

Belongs to the DnaJ family. As to quaternary structure, homodimer. It depends on Zn(2+) as a cofactor.

Its subcellular location is the cytoplasm. Participates actively in the response to hyperosmotic and heat shock by preventing the aggregation of stress-denatured proteins and by disaggregating proteins, also in an autonomous, DnaK-independent fashion. Unfolded proteins bind initially to DnaJ; upon interaction with the DnaJ-bound protein, DnaK hydrolyzes its bound ATP, resulting in the formation of a stable complex. GrpE releases ADP from DnaK; ATP binding to DnaK triggers the release of the substrate protein, thus completing the reaction cycle. Several rounds of ATP-dependent interactions between DnaJ, DnaK and GrpE are required for fully efficient folding. Also involved, together with DnaK and GrpE, in the DNA replication of plasmids through activation of initiation proteins. This is Chaperone protein DnaJ from Wolbachia sp. subsp. Brugia malayi (strain TRS).